The sequence spans 485 residues: Adenosylhomocysteinase (485 aa).

3 residues coordinate substrate: T60, D146, and E208. Position 209–211 (209–211) interacts with NAD(+); sequence TTT. Positions 238 and 242 each coordinate substrate. NAD(+) contacts are provided by residues N243, 272-277, E295, N330, 351-353, and N399; these read GYGDVG and IGH.

It belongs to the adenosylhomocysteinase family. It depends on NAD(+) as a cofactor.

The protein localises to the cytoplasm. It carries out the reaction S-adenosyl-L-homocysteine + H2O = L-homocysteine + adenosine. It participates in amino-acid biosynthesis; L-homocysteine biosynthesis; L-homocysteine from S-adenosyl-L-homocysteine: step 1/1. Its function is as follows. May play a key role in the regulation of the intracellular concentration of adenosylhomocysteine. In Streptomyces avermitilis (strain ATCC 31267 / DSM 46492 / JCM 5070 / NBRC 14893 / NCIMB 12804 / NRRL 8165 / MA-4680), this protein is Adenosylhomocysteinase.